We begin with the raw amino-acid sequence, 808 residues long: MDKFAEIRKRLKQKHNEWLQQTAAERIEQDAGIKMTARTIQGLRITRNSKNDESSLHVDSATDLEMDVTGASKFESKKETFDYRPNTSSSRIVLTPKSNDCKTEKKLVSGDDVTEISRPTSSSAVEISELPEVCVKVVFSQPCDVSRYPSDATKVRITKCDHANWRGWRSFLHALGICNREIQDSFLEQAASGCSAHVKDVVTAFDRGENLELLCAMAGVNVCLVNVSDEEIELIKISPEPLTCVVRIDFVGSEIKCLPCHATDAALASLFKTALRVYDYGRRIPWMHLSETVTFLSLDKTRTRVNVSNLCFDDGWRNIFEALNNDYPELYLVPENGDPEARSRCFIDPERQIEEEERYRAAKEAYLKRMNTPLEWWQEEVLTLTDGEREPKLDEFFFRTLLPRIIRQNAHCGDNPTEKLPMIGFGFDAIMKSRAERASQMSIGAKGNAGKEVGLPLRYKQHVINFRKREMHQKNSNIMTGYLPGGLLHDTLGGIVICLRLDIFEDTVISVYGIYNGMKLIRLICMICVYSGINIPGRPYFVYEVGEGILLTPGMFEEYFTGARTVSRLTSTHGVIHLGKLERCVRQFNNYLSAFKIKPGEIIDRSRAPRCKAKEKKFVPRSVGKGVFYASDLANYPFEINRHDKRSGLFHVGEIDFQAAISSIWPQMMCHYMASEDREDKQDDEKSKSDNFLVPEAVDPSLVIPSAAIYDCGMSKVNPENAKVKTRGNKLLLPCGMLEHCRATSLTKHRCLLPYLGVLACDLPYGSERMPACLGCGRLYPQQILAKLCAQVRCPAWPSTSDCLIRSE.

The protein localises to the virion. The protein is Putative minor structural protein VP5 of Rice ragged stunt virus (isolate Thailand) (RRSV).